Consider the following 422-residue polypeptide: Serine--tRNA ligase (422 aa).

The disordered stretch occupies residues 1–20 (MHDLKSIRDNPDGFDAGLKR). L-serine is bound at residue 229–231 (TAE). 260 to 262 (RSE) contributes to the ATP binding site. An L-serine-binding site is contributed by Glu-283. 347-350 (EISS) lines the ATP pocket. Ser-383 provides a ligand contact to L-serine.

Belongs to the class-II aminoacyl-tRNA synthetase family. Type-1 seryl-tRNA synthetase subfamily. In terms of assembly, homodimer. The tRNA molecule binds across the dimer.

The protein localises to the cytoplasm. It catalyses the reaction tRNA(Ser) + L-serine + ATP = L-seryl-tRNA(Ser) + AMP + diphosphate + H(+). The enzyme catalyses tRNA(Sec) + L-serine + ATP = L-seryl-tRNA(Sec) + AMP + diphosphate + H(+). Its pathway is aminoacyl-tRNA biosynthesis; selenocysteinyl-tRNA(Sec) biosynthesis; L-seryl-tRNA(Sec) from L-serine and tRNA(Sec): step 1/1. Catalyzes the attachment of serine to tRNA(Ser). Is also able to aminoacylate tRNA(Sec) with serine, to form the misacylated tRNA L-seryl-tRNA(Sec), which will be further converted into selenocysteinyl-tRNA(Sec). In Paramagnetospirillum magneticum (strain ATCC 700264 / AMB-1) (Magnetospirillum magneticum), this protein is Serine--tRNA ligase.